A 256-amino-acid polypeptide reads, in one-letter code: Ribosomal RNA small subunit methyltransferase A (256 aa).

Residues asparagine 12, leucine 14, glycine 39, glutamate 60, aspartate 85, and asparagine 103 each contribute to the S-adenosyl-L-methionine site.

The protein belongs to the class I-like SAM-binding methyltransferase superfamily. rRNA adenine N(6)-methyltransferase family. RsmA subfamily.

The protein resides in the cytoplasm. The catalysed reaction is adenosine(1518)/adenosine(1519) in 16S rRNA + 4 S-adenosyl-L-methionine = N(6)-dimethyladenosine(1518)/N(6)-dimethyladenosine(1519) in 16S rRNA + 4 S-adenosyl-L-homocysteine + 4 H(+). In terms of biological role, specifically dimethylates two adjacent adenosines (A1518 and A1519) in the loop of a conserved hairpin near the 3'-end of 16S rRNA in the 30S particle. May play a critical role in biogenesis of 30S subunits. The polypeptide is Ribosomal RNA small subunit methyltransferase A (Legionella pneumophila subsp. pneumophila (strain Philadelphia 1 / ATCC 33152 / DSM 7513)).